We begin with the raw amino-acid sequence, 245 residues long: Probable GTP-binding protein EngB (245 aa).

One can recognise an EngB-type G domain in the interval 46–223 (DVPEIAFVGR…AQHLWDWAHP (178 aa)). GTP is bound by residues 54-61 (GRSNAGKS), 81-85 (GRTQS), 103-106 (DLPG), 173-176 (TKSD), and 202-204 (FSS). Mg(2+) contacts are provided by Ser-61 and Thr-83. Residues 219 to 245 (DWAHPPEKPAKKPKAEPAAEAATGDEG) form a disordered region. The span at 222 to 235 (HPPEKPAKKPKAEP) shows a compositional bias: basic and acidic residues. The span at 236-245 (AAEAATGDEG) shows a compositional bias: low complexity.

This sequence belongs to the TRAFAC class TrmE-Era-EngA-EngB-Septin-like GTPase superfamily. EngB GTPase family. Mg(2+) serves as cofactor.

Necessary for normal cell division and for the maintenance of normal septation. This chain is Probable GTP-binding protein EngB, found in Polaromonas sp. (strain JS666 / ATCC BAA-500).